A 23-amino-acid polypeptide reads, in one-letter code: KVIDVKCTSPKQCLPPCKAQFGD.

Belongs to the short scorpion toxin superfamily. Potassium channel inhibitor family. Alpha-KTx 02 subfamily. In terms of tissue distribution, expressed by the venom gland.

It localises to the secreted. In terms of biological role, potent selective inhibitor of Kv1/KCNA voltage-gated potassium channels. The polypeptide is Hongotoxin-4 (Centruroides limbatus (Bark scorpion)).